A 251-amino-acid polypeptide reads, in one-letter code: Imidazole glycerol phosphate synthase subunit HisF (251 aa).

Residues Asp11 and Asp130 contribute to the active site.

The protein belongs to the HisA/HisF family. In terms of assembly, heterodimer of HisH and HisF.

It is found in the cytoplasm. It carries out the reaction 5-[(5-phospho-1-deoxy-D-ribulos-1-ylimino)methylamino]-1-(5-phospho-beta-D-ribosyl)imidazole-4-carboxamide + L-glutamine = D-erythro-1-(imidazol-4-yl)glycerol 3-phosphate + 5-amino-1-(5-phospho-beta-D-ribosyl)imidazole-4-carboxamide + L-glutamate + H(+). Its pathway is amino-acid biosynthesis; L-histidine biosynthesis; L-histidine from 5-phospho-alpha-D-ribose 1-diphosphate: step 5/9. In terms of biological role, IGPS catalyzes the conversion of PRFAR and glutamine to IGP, AICAR and glutamate. The HisF subunit catalyzes the cyclization activity that produces IGP and AICAR from PRFAR using the ammonia provided by the HisH subunit. This is Imidazole glycerol phosphate synthase subunit HisF from Flavobacterium psychrophilum (strain ATCC 49511 / DSM 21280 / CIP 103535 / JIP02/86).